We begin with the raw amino-acid sequence, 687 residues long: Dictomallein (687 aa).

Disordered regions lie at residues 1-45 and 73-112; these read MGNG…SRRL and TAGG…STSA. A Peptidase M66 domain is found at 233–501; that stretch reads PVFGTDADVQ…QAWIASRVLA (269 aa). Residue H393 coordinates Zn(2+). E394 is a catalytic residue. Residues H397 and H403 each contribute to the Zn(2+) site.

It belongs to the dictomallein family. Zn(2+) serves as cofactor.

In Burkholderia pseudomallei (strain 668), this protein is Dictomallein (dtmL).